Consider the following 226-residue polypeptide: Leucyl/phenylalanyl-tRNA--protein transferase (226 aa).

It belongs to the L/F-transferase family.

The protein resides in the cytoplasm. The catalysed reaction is N-terminal L-lysyl-[protein] + L-leucyl-tRNA(Leu) = N-terminal L-leucyl-L-lysyl-[protein] + tRNA(Leu) + H(+). It carries out the reaction N-terminal L-arginyl-[protein] + L-leucyl-tRNA(Leu) = N-terminal L-leucyl-L-arginyl-[protein] + tRNA(Leu) + H(+). The enzyme catalyses L-phenylalanyl-tRNA(Phe) + an N-terminal L-alpha-aminoacyl-[protein] = an N-terminal L-phenylalanyl-L-alpha-aminoacyl-[protein] + tRNA(Phe). Functions in the N-end rule pathway of protein degradation where it conjugates Leu, Phe and, less efficiently, Met from aminoacyl-tRNAs to the N-termini of proteins containing an N-terminal arginine or lysine. The sequence is that of Leucyl/phenylalanyl-tRNA--protein transferase from Salinibacter ruber (strain DSM 13855 / M31).